We begin with the raw amino-acid sequence, 606 residues long: Acetylcholinesterase (606 aa).

The signal sequence occupies residues 1-28; that stretch reads MPSCQPGKMPAPWPWWLQLLLCIPSCVA. A disulfide bridge links cysteine 98 with cysteine 125. Residue serine 231 is the Acyl-ester intermediate of the active site. A disulfide bond links cysteine 285 and cysteine 296. Asparagine 289 carries N-linked (GlcNAc...) asparagine glycosylation. Catalysis depends on glutamate 358, which acts as the Charge relay system. The N-linked (GlcNAc...) asparagine glycan is linked to asparagine 374. A disulfide bond links cysteine 433 and cysteine 552. The active-site Charge relay system is the histidine 471. Asparagine 484 carries N-linked (GlcNAc...) asparagine glycosylation.

The protein belongs to the type-B carboxylesterase/lipase family. As to quaternary structure, isoform S is monomeric. Isoform T can form oligomers, including collagen-tailed forms. The N-terminus is blocked. As to expression, liver and muscle contain both isoform T and isoform S. Venom gland predominantly contains isoform S.

The protein localises to the synapse. Its subcellular location is the secreted. It is found in the cell membrane. It carries out the reaction acetylcholine + H2O = choline + acetate + H(+). With respect to regulation, inhibited by active site inhibitors: edrophonium, trimethyl-(m-acetamidopheny1)-ammonium iodide, and trimethyl-(p-acetarnidopheny1)-ammonium iodide. Inhibited by both active and peripheral site inhibitors: decamethonium, and BW284c51. Inhibited by peripheral site inhibitors: snake acetylcholinesterase fasciculin-2, propidium, gallamine, D-tubocurarine, and tacrine. Also inhibited by antibodies Elec410 and Fab410. In terms of biological role, in muscle, it terminates signal transduction at the neuromuscular junction by rapid hydrolysis of the acetylcholine released into the synaptic cleft. In liver, its function is unclear: it could serve as a safeguard against any diffusion of acetylcholine from synapses into the circulation. In venom, its toxic role is unclear: it could result in less musculatory control by rapidly hydrolyzing acetylcholine, or that it works synergistically with alkaline phosphatase (ALP) in paralyzing prey through hypotension. The sequence is that of Acetylcholinesterase (ACHE) from Bungarus fasciatus (Banded krait).